Here is a 211-residue protein sequence, read N- to C-terminus: Small ribosomal subunit protein uS3 (211 aa).

The KH type-2 domain occupies 38–106; it reads LRKFIKKAFY…NIELNIIEVK (69 aa).

The protein belongs to the universal ribosomal protein uS3 family. In terms of assembly, part of the 30S ribosomal subunit. Forms a tight complex with proteins S10 and S14.

Functionally, binds the lower part of the 30S subunit head. Binds mRNA in the 70S ribosome, positioning it for translation. This Ehrlichia ruminantium (strain Welgevonden) protein is Small ribosomal subunit protein uS3.